Reading from the N-terminus, the 413-residue chain is Alpha-1-antitrypsin 1-5 (413 aa).

The signal sequence occupies residues 1–24; that stretch reads MTPSISWCLLLLAGLCCLVPSFLA. 3 N-linked (GlcNAc...) asparagine glycosylation sites follow: asparagine 64, asparagine 101, and asparagine 265. Residues 368-387 are RCL; that stretch reads AATVLQGGFLSMPPILHFNR.

This sequence belongs to the serpin family.

The protein resides in the secreted. Does not inhibit elastase or chymotrypsin. No target protease has been identified to date. The sequence is that of Alpha-1-antitrypsin 1-5 (Serpina1e) from Mus musculus (Mouse).